We begin with the raw amino-acid sequence, 52 residues long: MWKVWLLFDPRRTLVALFTFLFVLALLIHFILLSTDRFNWMQGAPTAPAQTS.

Over 1-12 the chain is Cytoplasmic; the sequence is MWKVWLLFDPRR. Residues 13–33 form a helical membrane-spanning segment; that stretch reads TLVALFTFLFVLALLIHFILL. H29 provides a ligand contact to a bacteriochlorophyll. The Periplasmic segment spans residues 34–52; it reads STDRFNWMQGAPTAPAQTS.

Belongs to the antenna complex alpha subunit family. The core complex is formed by different alpha and beta chains, binding bacteriochlorophyll molecules, and arranged most probably in tetrameric structures disposed around the reaction center. The non-pigmented gamma chains may constitute additional components.

It is found in the cell inner membrane. Antenna complexes are light-harvesting systems, which transfer the excitation energy to the reaction centers. In Afifella marina (Rhodobium marinum), this protein is Light-harvesting protein B-880 alpha chain.